We begin with the raw amino-acid sequence, 163 residues long: Ribosome maturation factor RimP (163 aa).

A disordered region spans residues 66 to 85 (ALDRDDPVPGPPYELEVSSP).

This sequence belongs to the RimP family.

The protein localises to the cytoplasm. In terms of biological role, required for maturation of 30S ribosomal subunits. This Kocuria rhizophila (strain ATCC 9341 / DSM 348 / NBRC 103217 / DC2201) protein is Ribosome maturation factor RimP.